The sequence spans 344 residues: L-rhamnose-proton symporter (344 aa).

Helical transmembrane passes span 4–24 (AITMGIFWHLIGAASAACFYA), 38–58 (WSVGGIVSWLILPWTISALLL), 68–88 (FNLSTLLPVFLFGAMWGIGNI), 101–121 (MGIGIAIGITLIVGTLMTPII), 137–157 (TLLGVFVALIGVGIVTRAGQL), 175–195 (LLLAVICGIFSAGMSFAMNAA), 214–234 (LPSYVVIMGGGALVNLGFCFI), 259–279 (ILLSALGGLMWYLQFFFYAWG), 290–310 (MSWMLHMSFYVLCGGLVGLVL), and 321–341 (VAVLSLGCVVIIIAANIVGLG).

This sequence belongs to the L-rhamnose transporter (TC 2.A.7.6) family.

The protein resides in the cell inner membrane. It catalyses the reaction L-rhamnopyranose(in) + H(+)(in) = L-rhamnopyranose(out) + H(+)(out). Uptake of L-rhamnose across the cytoplasmic membrane with the concomitant transport of protons into the cell (symport system). In Salmonella paratyphi A (strain ATCC 9150 / SARB42), this protein is L-rhamnose-proton symporter.